The following is a 32-amino-acid chain: Potassium channel toxin alpha-KTx 10.2 (32 aa).

3 cysteine pairs are disulfide-bonded: Cys-3–Cys-22, Cys-8–Cys-12, and Cys-27–Cys-29. Tyr-32 is subject to Tyrosine amide.

This sequence belongs to the short scorpion toxin superfamily. Potassium channel inhibitor family. Alpha-KTx 10 subfamily. In terms of tissue distribution, expressed by the venom gland.

Its subcellular location is the secreted. Functionally, blocks Shaker B potassium-channels (Kv1.1/KCNA1 sub-family). This chain is Potassium channel toxin alpha-KTx 10.2, found in Centruroides noxius (Mexican scorpion).